The following is a 232-amino-acid chain: MIEGLQEMLKRDFNITFKDVDLLDAAFTHASYVNETPERKKKLKYYERIEFLGDAVMQLCVSEYIYEHYPEMPEGKMSRLRAAMVRADSFSKFAIECHFNEYIRLGKGEEKGNARQRPSLLCDIFESFIGALYLDQGKDEVVRFISKVIFPKLELGWFDHMMDNKTELQEVLQQNGECKIKYNEVNVTGPDNERVYTMNVVVNNEVMGEGTGRTKKAAEQMAAYQALKKLRK.

The RNase III domain maps to 6–137 (QEMLKRDFNI…FIGALYLDQG (132 aa)). Mg(2+) is bound at residue E50. Residue D54 is part of the active site. Positions 123 and 126 each coordinate Mg(2+). The active site involves E126. Residues 163-232 (DNKTELQEVL…AYQALKKLRK (70 aa)) form the DRBM domain.

Belongs to the ribonuclease III family. As to quaternary structure, homodimer. Mg(2+) serves as cofactor.

It localises to the cytoplasm. The enzyme catalyses Endonucleolytic cleavage to 5'-phosphomonoester.. Functionally, digests double-stranded RNA. Involved in the processing of primary rRNA transcript to yield the immediate precursors to the large and small rRNAs (23S and 16S). Processes some mRNAs, and tRNAs when they are encoded in the rRNA operon. Processes pre-crRNA and tracrRNA of type II CRISPR loci if present in the organism. This chain is Ribonuclease 3, found in Ligilactobacillus salivarius (strain UCC118) (Lactobacillus salivarius).